An 896-amino-acid polypeptide reads, in one-letter code: Translation initiation factor IF-2 (896 aa).

The tract at residues 1–260 is disordered; sequence MDIENTNKPD…AQTNKKAHKA (260 aa). Over residues 19–34 the composition is skewed to basic and acidic residues; it reads KAADSKPESGKTDSKR. A compositionally biased stretch (low complexity) spans 56–66; the sequence is EESSGGKASGK. Positions 85-136 are enriched in basic and acidic residues; sequence SVKEKKPDERLEETKKTAPRFEDKKSDAPSAQNEKRSFDSAKKEEKQTERKK. Positions 168–177 are enriched in low complexity; sequence RGQGNRPQRP. The tr-type G domain maps to 375-544; the sequence is PRPPVVTIMG…LLQAEVLELK (170 aa). The G1 stretch occupies residues 384 to 391; the sequence is GHVDHGKT. Residue 384–391 participates in GTP binding; the sequence is GHVDHGKT. A G2 region spans residues 409–413; sequence GITQH. Residues 430–433 are G3; it reads DTPG. Residues 430 to 434 and 484 to 487 each bind GTP; these read DTPGH and NKVD. Residues 484–487 form a G4 region; that stretch reads NKVD. The interval 520–522 is G5; the sequence is SAL. The interval 877–896 is disordered; sequence SDSEKYKAPEIKEEGTETDE.

It belongs to the TRAFAC class translation factor GTPase superfamily. Classic translation factor GTPase family. IF-2 subfamily.

It is found in the cytoplasm. Its function is as follows. One of the essential components for the initiation of protein synthesis. Protects formylmethionyl-tRNA from spontaneous hydrolysis and promotes its binding to the 30S ribosomal subunits. Also involved in the hydrolysis of GTP during the formation of the 70S ribosomal complex. The sequence is that of Translation initiation factor IF-2 from Treponema denticola (strain ATCC 35405 / DSM 14222 / CIP 103919 / JCM 8153 / KCTC 15104).